A 241-amino-acid polypeptide reads, in one-letter code: Glucosamine-6-phosphate deaminase (241 aa).

The Proton acceptor; for enolization step role is filled by D67. N136 serves as the catalytic For ring-opening step. Catalysis depends on H138, which acts as the Proton acceptor; for ring-opening step. The active-site For ring-opening step is the E143.

This sequence belongs to the glucosamine/galactosamine-6-phosphate isomerase family. NagB subfamily.

The catalysed reaction is alpha-D-glucosamine 6-phosphate + H2O = beta-D-fructose 6-phosphate + NH4(+). It participates in amino-sugar metabolism; N-acetylneuraminate degradation; D-fructose 6-phosphate from N-acetylneuraminate: step 5/5. Catalyzes the reversible isomerization-deamination of glucosamine 6-phosphate (GlcN6P) to form fructose 6-phosphate (Fru6P) and ammonium ion. The sequence is that of Glucosamine-6-phosphate deaminase from Bacillus velezensis (strain DSM 23117 / BGSC 10A6 / LMG 26770 / FZB42) (Bacillus amyloliquefaciens subsp. plantarum).